The chain runs to 50 residues: Sperm protamine P1 (50 aa).

It belongs to the protamine P1 family. In terms of tissue distribution, testis.

The protein resides in the nucleus. Its subcellular location is the chromosome. In terms of biological role, protamines substitute for histones in the chromatin of sperm during the haploid phase of spermatogenesis. They compact sperm DNA into a highly condensed, stable and inactive complex. This Chilonatalus micropus (Cuban funnel-eared bat) protein is Sperm protamine P1 (PRM1).